The chain runs to 66 residues: UPF0457 protein BA_2525/GBAA_2525/BAS2348 (66 aa).

The protein belongs to the UPF0457 family.

The polypeptide is UPF0457 protein BA_2525/GBAA_2525/BAS2348 (Bacillus anthracis).